The following is a 504-amino-acid chain: Maturase K (504 aa).

Belongs to the intron maturase 2 family. MatK subfamily.

It is found in the plastid. The protein resides in the chloroplast. Usually encoded in the trnK tRNA gene intron. Probably assists in splicing its own and other chloroplast group II introns. The polypeptide is Maturase K (Hamamelis virginiana (Witch-hazel)).